The sequence spans 179 residues: ADP-ribosylation factor-like protein 5B (179 aa).

The N-myristoyl glycine moiety is linked to residue Gly-2. GTP is bound by residues 23–30, 66–70, 125–128, and Ala-159; these read GLDNAGKT, DIGGQ, and NKQD.

Belongs to the small GTPase superfamily. Arf family.

In terms of biological role, binds and exchanges GTP and GDP. This Mus musculus (Mouse) protein is ADP-ribosylation factor-like protein 5B (Arl5b).